The primary structure comprises 385 residues: Initiation-specific alpha-1,6-mannosyltransferase (385 aa).

Over 1–15 the chain is Cytoplasmic; the sequence is MLQLREPQMVHKHLK. A helical; Signal-anchor for type II membrane protein membrane pass occupies residues 16-36; it reads LAVLGIVVIFTTYFIISSLSS. Residues 37 to 385 lie on the Lumenal side of the membrane; that stretch reads PTSTHKTEYN…KDDGMPEMEQ (349 aa). A DXD motif motif is present at residues 189–191; it reads DID.

The protein belongs to the glycosyltransferase 32 family. Requires Mn(2+) as cofactor.

It is found in the endoplasmic reticulum membrane. Its subcellular location is the golgi apparatus membrane. The catalysed reaction is Transfers an alpha-D-mannosyl residue from GDP-mannose into lipid-linked oligosaccharide, forming an alpha-(1-&gt;6)-D-mannosyl-D-mannose linkage.. Functionally, mannosyltransferase involved in outer chain elongation of asparagine-linked oligosaccharides of the type Man(9)GlcNAc(2). Adds the first alpha-1,6-mannose to the Man(8)GlcNAc(2) and Man(9)GlcNAc(2), but not Man(5)GlcNAc(2), endoplasmic reticulum intermediates. Represents the first enzymatic event required for synthesis of outer chain mannose linkages on yeast secretory proteins. N-glycan outer chain epitopes play a crucial role in the host-fungal interaction, virulence, and host immune response such as interleukin synthesis or phagocytosis by neutrophils. The polypeptide is Initiation-specific alpha-1,6-mannosyltransferase (Candida albicans (strain SC5314 / ATCC MYA-2876) (Yeast)).